Reading from the N-terminus, the 488-residue chain is Inosine-5'-monophosphate dehydrogenase (488 aa).

CBS domains lie at 95 to 153 (VITN…SMKI) and 157 to 214 (MTKE…PNSS). Residues aspartate 251 and 301-303 (GIG) each bind NAD(+). K(+) contacts are provided by glycine 303 and glycine 305. IMP is bound at residue serine 306. Cysteine 308 contributes to the K(+) binding site. Cysteine 308 serves as the catalytic Thioimidate intermediate. IMP contacts are provided by residues 341–343 (DGG), 364–365 (GS), and 388–392 (YRGMG). Arginine 404 (proton acceptor) is an active-site residue. Position 416 (glutamate 416) interacts with IMP. Residues glutamate 470, serine 471, and histidine 472 each contribute to the K(+) site.

It belongs to the IMPDH/GMPR family. Homotetramer. K(+) is required as a cofactor.

The catalysed reaction is IMP + NAD(+) + H2O = XMP + NADH + H(+). It participates in purine metabolism; XMP biosynthesis via de novo pathway; XMP from IMP: step 1/1. Its activity is regulated as follows. Mycophenolic acid (MPA) is a non-competitive inhibitor that prevents formation of the closed enzyme conformation by binding to the same site as the amobile flap. In contrast, mizoribine monophosphate (MZP) is a competitive inhibitor that induces the closed conformation. MPA is a potent inhibitor of mammalian IMPDHs but a poor inhibitor of the bacterial enzymes. MZP is a more potent inhibitor of bacterial IMPDH. In terms of biological role, catalyzes the conversion of inosine 5'-phosphate (IMP) to xanthosine 5'-phosphate (XMP), the first committed and rate-limiting step in the de novo synthesis of guanine nucleotides, and therefore plays an important role in the regulation of cell growth. The chain is Inosine-5'-monophosphate dehydrogenase from Bacillus subtilis (strain 168).